The chain runs to 388 residues: Beta-hexosaminidase LpqI (388 aa).

A signal peptide spans 1–19 (MAFPRTLAILAAAAALVVA). Cys20 is lipidated: N-palmitoyl cysteine. Cys20 is lipidated: S-diacylglycerol cysteine. Residues Asp123, Arg131, Arg193, and 223–224 (KH) contribute to the substrate site. His236 functions as the Proton donor/acceptor in the catalytic mechanism. Asp311 serves as the catalytic Nucleophile.

Belongs to the glycosyl hydrolase 3 family.

It localises to the cell inner membrane. It catalyses the reaction Hydrolysis of terminal non-reducing N-acetyl-D-hexosamine residues in N-acetyl-beta-D-hexosaminides.. It functions in the pathway cell wall biogenesis; peptidoglycan recycling. Its function is as follows. Plays a role in peptidoglycan recycling by cleaving the terminal beta-1,4-linked N-acetylglucosamine (GlcNAc) from peptidoglycan fragments. Acts as a regulator for GlcNAc-MurNAc levels by cleaving disaccharides and allowing the breakdown of MurNAc. This is Beta-hexosaminidase LpqI from Mycobacterium tuberculosis (strain ATCC 25618 / H37Rv).